We begin with the raw amino-acid sequence, 189 residues long: WASH complex subunit homolog 3 (189 aa).

The stretch at M35 to M74 forms a coiled coil. 2 disordered regions span residues L76–S101 and S150–D189. Residues S150–S165 show a composition bias toward basic and acidic residues. The segment covering P167–D189 has biased composition (polar residues). T182 is modified (phosphothreonine).

It belongs to the CCDC53 family. Probable component of the WASH complex. Component of the DHIC (ddl-1-containing hsf-1 inhibitory complex), which contains at least ddl-1, ddl-2, hsb-1 and hsf-1. Within the complex, interacts with ddl-2. Within the complex, interacts with hsb-1. Within the complex, interacts with hsf-1. Formation of the DHIC may be dependent upon the Insulin/IGF-1-like signaling (IIS) mediated pathway. Post-translationally, phosphorylated. Phosphorylation on Thr-182 may promote DHIC complex dissociation and consequently the activation of heat-shock transcription factor hsf-1. Phosphorylation is modulated by the Insulin/IGF-1-like signaling (IIS) mediated pathway. Expressed in pharynx, intestine, body wall muscles, vulva muscles, spermatheca, and several head and tail neurons.

Its function is as follows. Acts as a component of the WASH core complex that functions as a nucleation-promoting factor (NPF) at the surface of endosomes, where it recruits and activates the Arp2/3 complex to induce actin polymerization, playing a key role in the fission of tubules that serve as transport intermediates during endosome sorting. Acts as a component of the DHIC (ddl-1-containing hsf-1 inhibitory complex) which modulates lifespan by sequestering the heat-shock transcription factor hsf-1 to negatively regulate its binding to DNA and its transcriptional activity. This is WASH complex subunit homolog 3 (ddl-1) from Caenorhabditis elegans.